A 317-amino-acid chain; its full sequence is Retinol dehydrogenase 16 (317 aa).

Residue F33 to L57 participates in NAD(+) binding. Residue S164 participates in substrate binding. Y176 (proton acceptor) is an active-site residue. The chain crosses the membrane as a helical span at residues L289–V309.

Belongs to the short-chain dehydrogenases/reductases (SDR) family. As to quaternary structure, homodimer. Not N-glycosylated. As to expression, highly expressed in adult liver (at protein level). Detected in endometrium, liver and foreskin. Detected in the spineous layers of adult skin, and at lower levels in basal and granular skin layers. Detected in fetal liver and lung.

Its subcellular location is the microsome membrane. It is found in the endoplasmic reticulum membrane. The enzyme catalyses all-trans-retinol--[retinol-binding protein] + NAD(+) = all-trans-retinal--[retinol-binding protein] + NADH + H(+). It catalyses the reaction all-trans-retinol + NAD(+) = all-trans-retinal + NADH + H(+). It carries out the reaction 13-cis-retinol + NAD(+) = 13-cis-retinal + NADH + H(+). The catalysed reaction is 11-cis-retinol + NAD(+) = 11-cis-retinal + NADH + H(+). The enzyme catalyses 9-cis-retinol + NAD(+) = 9-cis-retinal + NADH + H(+). It catalyses the reaction 5alpha-androstane-3alpha,17beta-diol + NAD(+) = 17beta-hydroxy-5alpha-androstan-3-one + NADH + H(+). It carries out the reaction androsterone + NAD(+) = 5alpha-androstan-3,17-dione + NADH + H(+). The protein operates within cofactor metabolism; retinol metabolism. With respect to regulation, inhibited by citral, perillyl alcohol, geraniol, farnesol and geranyl geraniol. Functionally, oxidoreductase with a preference for NAD. Oxidizes all-trans-retinol, 9-cis-retinol, 11-cis-retinol and 13-cis-retinol to the corresponding aldehydes. Has higher activity towards CRBP-bound retinol than with free retinol. Also oxidizes 3-alpha-hydroxysteroids. Oxidizes androstanediol and androsterone to dihydrotestosterone and androstanedione. Can also catalyze the reverse reaction. This chain is Retinol dehydrogenase 16, found in Homo sapiens (Human).